Here is a 188-residue protein sequence, read N- to C-terminus: Large ribosomal subunit protein uL5 (188 aa).

It belongs to the universal ribosomal protein uL5 family. In terms of assembly, part of the 50S ribosomal subunit; part of the 5S rRNA/L5/L18/L25 subcomplex. Contacts the 5S rRNA and the P site tRNA. Forms a bridge to the 30S subunit in the 70S ribosome.

This is one of the proteins that bind and probably mediate the attachment of the 5S RNA into the large ribosomal subunit, where it forms part of the central protuberance. In the 70S ribosome it contacts protein S13 of the 30S subunit (bridge B1b), connecting the 2 subunits; this bridge is implicated in subunit movement. Contacts the P site tRNA; the 5S rRNA and some of its associated proteins might help stabilize positioning of ribosome-bound tRNAs. The polypeptide is Large ribosomal subunit protein uL5 (Aquifex pyrophilus).